The sequence spans 247 residues: 2,3-bisphosphoglycerate-dependent phosphoglycerate mutase (247 aa).

Substrate contacts are provided by residues arginine 13–asparagine 20, threonine 26–glycine 27, arginine 65, glutamate 92–tyrosine 95, lysine 103, arginine 119–arginine 120, and glycine 186–asparagine 187. Catalysis depends on histidine 14, which acts as the Tele-phosphohistidine intermediate. Glutamate 92 functions as the Proton donor/acceptor in the catalytic mechanism.

It belongs to the phosphoglycerate mutase family. BPG-dependent PGAM subfamily. As to quaternary structure, homotetramer, dimer of dimers.

The enzyme catalyses (2R)-2-phosphoglycerate = (2R)-3-phosphoglycerate. Its pathway is carbohydrate degradation; glycolysis; pyruvate from D-glyceraldehyde 3-phosphate: step 3/5. Functionally, catalyzes the interconversion of 2-phosphoglycerate and 3-phosphoglycerate. The sequence is that of 2,3-bisphosphoglycerate-dependent phosphoglycerate mutase from Mycobacterium leprae (strain Br4923).